The primary structure comprises 246 residues: Eukaryotic translation initiation factor 6 (246 aa).

Phosphoserine; by CK1 is present on residues serine 174 and serine 175.

The protein belongs to the eIF-6 family. Monomer. Associates with the 60S ribosomal subunit. In terms of processing, phosphorylation at Ser-174 and Ser-175 promotes nuclear export.

It localises to the cytoplasm. The protein localises to the nucleus. It is found in the nucleolus. Its function is as follows. Binds to the 60S ribosomal subunit and prevents its association with the 40S ribosomal subunit to form the 80S initiation complex in the cytoplasm. Is also involved in ribosome biogenesis. Associates with pre-60S subunits in the nucleus and is involved in its nuclear export. In Verticillium alfalfae (strain VaMs.102 / ATCC MYA-4576 / FGSC 10136) (Verticillium wilt of alfalfa), this protein is Eukaryotic translation initiation factor 6.